Consider the following 42-residue polypeptide: Delta-hexatoxin-Hv1a (42 aa).

Disulfide bonds link Cys1–Cys15, Cys8–Cys20, Cys14–Cys31, and Cys16–Cys42.

This sequence belongs to the neurotoxin 06 (delta-actx) family. In terms of tissue distribution, expressed by the venom gland.

The protein resides in the secreted. Its function is as follows. Inhibits tetrodotoxin-sensitive voltage-gated sodium channels (Nav) by binding to site 3. Slows the inactivation, and causes a prolongation of action potential duration resulting in repetitive firing in autonomic and motor nerve fibers. Does not depolarize the resting potential. Does not affect tetrodotoxin-resistant sodium channels. This lethal neurotoxin is active on both insect and mammalian voltage-gated sodium channels. Pan-neuronal expression in Drosophila is lethal but flies engineered to express the toxin only in pacemaker neurons have profound defects in circadian rhythm but a normal lifespan. In Hadronyche versuta (Blue mountains funnel-web spider), this protein is Delta-hexatoxin-Hv1a.